The primary structure comprises 286 residues: Beta-lactamase SHV-24 (286 aa).

The signal sequence occupies residues 1-21; sequence MRYIRLCIISLLATLPLAVHA. Ser-66 acts as the Acyl-ester intermediate in catalysis. Cysteines 73 and 119 form a disulfide. Residue Glu-164 is the Proton acceptor of the active site. Position 230–232 (230–232) interacts with substrate; the sequence is KTG.

This sequence belongs to the class-A beta-lactamase family.

The catalysed reaction is a beta-lactam + H2O = a substituted beta-amino acid. Its function is as follows. Hydrolyzes ampicillin. Can also hydrolyze cephaloridine, aztreonam and ceftazidime with a low catalytic rate. This is Beta-lactamase SHV-24 (bla) from Escherichia coli.